A 292-amino-acid polypeptide reads, in one-letter code: NAD kinase (292 aa).

The active-site Proton acceptor is the Asp73. Residues 73-74 (DG), 147-148 (NE), His158, Arg175, Asp177, 188-193 (TAYSLS), and Gln247 contribute to the NAD(+) site.

This sequence belongs to the NAD kinase family. Requires a divalent metal cation as cofactor.

It is found in the cytoplasm. The enzyme catalyses NAD(+) + ATP = ADP + NADP(+) + H(+). Involved in the regulation of the intracellular balance of NAD and NADP, and is a key enzyme in the biosynthesis of NADP. Catalyzes specifically the phosphorylation on 2'-hydroxyl of the adenosine moiety of NAD to yield NADP. The polypeptide is NAD kinase (Photorhabdus laumondii subsp. laumondii (strain DSM 15139 / CIP 105565 / TT01) (Photorhabdus luminescens subsp. laumondii)).